We begin with the raw amino-acid sequence, 353 residues long: Photosystem II D2 protein (353 aa).

T2 bears the N-acetylthreonine mark. At T2 the chain carries Phosphothreonine. The chain crosses the membrane as a helical span at residues 41-61; sequence CAYFALGGWFTGTTFVTSWYT. H118 contacts chlorophyll a. A helical transmembrane segment spans residues 125–141; the sequence is GFMLRQFELARSVQLRP. Residues Q130 and N143 each contribute to the pheophytin a site. The helical transmembrane segment at 153–166 threads the bilayer; the sequence is VFVSVFLIYPLGQS. H198 lines the chlorophyll a pocket. Residues 208-228 traverse the membrane as a helical segment; sequence AALLCAIHGATVENTLFEDGD. Residues H215 and F262 each contribute to the a plastoquinone site. Fe cation is bound at residue H215. H269 is a binding site for Fe cation. The chain crosses the membrane as a helical span at residues 279–295; the sequence is GLWMSAIGVVGLALNLR.

Belongs to the reaction center PufL/M/PsbA/D family. In terms of assembly, PSII is composed of 1 copy each of membrane proteins PsbA, PsbB, PsbC, PsbD, PsbE, PsbF, PsbH, PsbI, PsbJ, PsbK, PsbL, PsbM, PsbT, PsbX, PsbY, PsbZ, Psb30/Ycf12, at least 3 peripheral proteins of the oxygen-evolving complex and a large number of cofactors. It forms dimeric complexes. The D1/D2 heterodimer binds P680, chlorophylls that are the primary electron donor of PSII, and subsequent electron acceptors. It shares a non-heme iron and each subunit binds pheophytin, quinone, additional chlorophylls, carotenoids and lipids. There is also a Cl(-1) ion associated with D1 and D2, which is required for oxygen evolution. The PSII complex binds additional chlorophylls, carotenoids and specific lipids. serves as cofactor.

The protein resides in the plastid. The protein localises to the chloroplast thylakoid membrane. The enzyme catalyses 2 a plastoquinone + 4 hnu + 2 H2O = 2 a plastoquinol + O2. Its function is as follows. Photosystem II (PSII) is a light-driven water:plastoquinone oxidoreductase that uses light energy to abstract electrons from H(2)O, generating O(2) and a proton gradient subsequently used for ATP formation. It consists of a core antenna complex that captures photons, and an electron transfer chain that converts photonic excitation into a charge separation. The D1/D2 (PsbA/PsbD) reaction center heterodimer binds P680, the primary electron donor of PSII as well as several subsequent electron acceptors. D2 is needed for assembly of a stable PSII complex. This is Photosystem II D2 protein from Welwitschia mirabilis (Tree tumbo).